Here is a 355-residue protein sequence, read N- to C-terminus: Spore germination protein XB (355 aa).

10 helical membrane-spanning segments follow: residues V2 to I24, D34 to V56, L69 to I91, F106 to I128, I135 to N157, G180 to L197, L210 to F232, V265 to L287, I299 to W321, and V326 to V348.

It belongs to the amino acid-polyamine-organocation (APC) superfamily. Spore germination protein (SGP) (TC 2.A.3.9) family.

The protein resides in the cell membrane. In terms of biological role, may allow B.anthracis to germinate within phagocytic cells and therefore involved in virulence. This Bacillus anthracis protein is Spore germination protein XB (gerXB).